The chain runs to 706 residues: Polyribonucleotide nucleotidyltransferase (706 aa).

Positions 488 and 494 each coordinate Mg(2+). Residues 555–614 enclose the KH domain; sequence PRLFTMKINPDKIRDVIGKGGSVIRALTEETGTQINIDEDGTITIASADPAKAEEAKRRI. In terms of domain architecture, S1 motif spans 624-692; it reads GKIYEGPITK…EKGRIKLSMK (69 aa).

The protein belongs to the polyribonucleotide nucleotidyltransferase family. Mg(2+) serves as cofactor.

The protein resides in the cytoplasm. The catalysed reaction is RNA(n+1) + phosphate = RNA(n) + a ribonucleoside 5'-diphosphate. Involved in mRNA degradation. Catalyzes the phosphorolysis of single-stranded polyribonucleotides processively in the 3'- to 5'-direction. The polypeptide is Polyribonucleotide nucleotidyltransferase (Albidiferax ferrireducens (strain ATCC BAA-621 / DSM 15236 / T118) (Rhodoferax ferrireducens)).